The sequence spans 492 residues: MRLSLSVLLCLGLALTLAQHNPHWWGNRNTIVHLFEWKWTDIADKCERFLGPRGYAGVQVSPANENIISEGRPWWERYQPISYKLVTRSGNELEFASMVKRCNDVGVRIYVDVLLNHMSADFEGLATGTGGSVAEPAKKSFPSVPYTADDFHETCEITDWNDRFQVQQCELVGLKDLNQNRDWVRTKLIEFLDHLIELGVAGFRVDAAKHMASEDLSFIYSSVRDLNINHGFPNNARPFIYQEVIDHGHETVTREEYNELGAVTEFRFSEEIGKAFRGNNALKWLQSWGTDWGFLSSGQALTFVDNHDNQRDSGDVLNYKSPKQYKMATAFHLAYPYGISRVMSSFGFDDRDQAPPQDAQEQLISPEFDADGGCTNGWICEHRWRQIYNMVEFKNTVRDTELTNWWDNGDNQIAFCRGSKGFIAINNNLYNLSETLQTCLPAGEYCDVISGSLVDGACTGKSVSVDGNGYGYIHIGTEDFDGVLAIHTDAKL.

An N-terminal signal peptide occupies residues 1–18; sequence MRLSLSVLLCLGLALTLA. Gln-19 bears the Pyrrolidone carboxylic acid mark. A disulfide bridge connects residues Cys-46 and Cys-102. Positions 116, 167, and 176 each coordinate Ca(2+). Residues Cys-155 and Cys-169 are joined by a disulfide bond. Arg-204 is a chloride binding site. The Nucleophile role is filled by Asp-206. Residue His-210 coordinates Ca(2+). The active-site Proton donor is the Glu-243. Chloride is bound by residues Asn-306 and Arg-341. 3 cysteine pairs are disulfide-bonded: Cys-374–Cys-380, Cys-416–Cys-439, and Cys-446–Cys-458.

This sequence belongs to the glycosyl hydrolase 13 family. Monomer. Ca(2+) is required as a cofactor. It depends on chloride as a cofactor.

The protein localises to the secreted. The catalysed reaction is Endohydrolysis of (1-&gt;4)-alpha-D-glucosidic linkages in polysaccharides containing three or more (1-&gt;4)-alpha-linked D-glucose units.. The polypeptide is Alpha-amylase-related protein (Amyrel) (Drosophila willistoni (Fruit fly)).